Here is a 318-residue protein sequence, read N- to C-terminus: Beta-ketoacyl-[acyl-carrier-protein] synthase III (318 aa).

Active-site residues include cysteine 112 and histidine 245. The segment at glutamine 246–arginine 250 is ACP-binding. Asparagine 275 is a catalytic residue.

This sequence belongs to the thiolase-like superfamily. FabH family. As to quaternary structure, homodimer.

It localises to the cytoplasm. It carries out the reaction malonyl-[ACP] + acetyl-CoA + H(+) = 3-oxobutanoyl-[ACP] + CO2 + CoA. The protein operates within lipid metabolism; fatty acid biosynthesis. Its function is as follows. Catalyzes the condensation reaction of fatty acid synthesis by the addition to an acyl acceptor of two carbons from malonyl-ACP. Catalyzes the first condensation reaction which initiates fatty acid synthesis and may therefore play a role in governing the total rate of fatty acid production. Possesses both acetoacetyl-ACP synthase and acetyl transacylase activities. Its substrate specificity determines the biosynthesis of branched-chain and/or straight-chain of fatty acids. This Blochmanniella floridana protein is Beta-ketoacyl-[acyl-carrier-protein] synthase III.